We begin with the raw amino-acid sequence, 610 residues long: All-trans-retinol 13,14-reductase (610 aa).

The N-terminal stretch at 1–18 is a signal peptide; it reads MWLPLVLFLAVLLLAVVC.

Belongs to the carotenoid/retinoid oxidoreductase family. CrtISO subfamily. NAD(+) is required as a cofactor. NADP(+) serves as cofactor. The cofactor is FAD.

Its subcellular location is the endoplasmic reticulum membrane. It catalyses the reaction all-trans-13,14-dihydroretinol + A = all-trans-retinol + AH2. In terms of biological role, catalyzes the saturation of all-trans-retinol to all-trans-13,14-dihydroretinol. Does not exhibit any activity toward all-trans-retinoic acid, nor 9-cis, 11-cis or 13-cis-retinol isomers. May play a role in the metabolism of vitamin A. Independently of retinol conversion, may regulate liver metabolism upstream of MLXIPL/ChREBP. May play a role in adipocyte differentiation. The chain is All-trans-retinol 13,14-reductase (RETSAT) from Macaca fascicularis (Crab-eating macaque).